A 196-amino-acid polypeptide reads, in one-letter code: Serine recombinase PinQ (196 aa).

One can recognise a Resolvase/invertase-type recombinase catalytic domain in the interval 3 to 143 (QIFAYCRIST…SGIVRARGAG (141 aa)). Residue serine 11 is the O-(5'-phospho-DNA)-serine intermediate of the active site.

The protein belongs to the site-specific recombinase resolvase family.

This chain is Serine recombinase PinQ (pinQ), found in Escherichia coli (strain K12).